The chain runs to 31 residues: L-amino-acid oxidase (31 aa).

Belongs to the flavin monoamine oxidase family. FIG1 subfamily. In terms of assembly, homodimer; non-covalently linked. FAD is required as a cofactor. N-glycosylated. Expressed by the venom gland.

The protein resides in the secreted. The catalysed reaction is an L-alpha-amino acid + O2 + H2O = a 2-oxocarboxylate + H2O2 + NH4(+). The enzyme catalyses L-leucine + O2 + H2O = 4-methyl-2-oxopentanoate + H2O2 + NH4(+). It catalyses the reaction L-phenylalanine + O2 + H2O = 3-phenylpyruvate + H2O2 + NH4(+). It carries out the reaction L-histidine + O2 + H2O = 3-(imidazol-5-yl)pyruvate + H2O2 + NH4(+). Functionally, catalyzes an oxidative deamination of predominantly hydrophobic and aromatic L-amino acids, thus producing hydrogen peroxide that may contribute to the diverse toxic effects of this enzyme. Is moderately active on L-Leu, L-His, and L-Phe, and very weakly active on L-Thr, and L-Cys. Exhibits diverse biological activities, such as hemorrhage, hemolysis, edema, antibacterial and antiparasitic activities, as well as regulation of platelet aggregation. Its effect on platelets is controversial, since it either induces aggregation or inhibits agonist-induced aggregation. These different effects are probably due to different experimental conditions. Inhibits growth of B.subtilis strain ATCC 6633 (MIC=32 uM), E.faecalis strain ATCC 12953 (MIC=32 uM), S.aureus strain ATCC 29213 (MIC=32 uM), S.pyogenes strain ATCC 19615 (MIC=8 uM), E.coli strain ATCC 8739 (MIC=4 uM), K.pneumoniae strain ATCC 13885 (MIC=2 uM), P.mirabilis strain ATCC 25933 (MIC=2 uM), P.aeruginosa strain ATCC 15442 (MIC=8 uM) and S.typhimurium strain ATCC 14028 (MIC=8 uM). The chain is L-amino-acid oxidase from Bothrops mattogrossensis (Pitviper).